The primary structure comprises 221 residues: 7-cyano-7-deazaguanine synthase (221 aa).

Residue 10 to 20 participates in ATP binding; the sequence is FSGGQDSTTCL. Residues cysteine 186, cysteine 195, cysteine 198, and cysteine 201 each coordinate Zn(2+).

Belongs to the QueC family. In terms of assembly, homodimer. It depends on Zn(2+) as a cofactor.

The enzyme catalyses 7-carboxy-7-deazaguanine + NH4(+) + ATP = 7-cyano-7-deazaguanine + ADP + phosphate + H2O + H(+). It functions in the pathway purine metabolism; 7-cyano-7-deazaguanine biosynthesis. In terms of biological role, catalyzes the ATP-dependent conversion of 7-carboxy-7-deazaguanine (CDG) to 7-cyano-7-deazaguanine (preQ(0)). The polypeptide is 7-cyano-7-deazaguanine synthase (Geobacillus thermodenitrificans (strain NG80-2)).